An 89-amino-acid chain; its full sequence is Small ribosomal subunit protein uS15 (89 aa).

Belongs to the universal ribosomal protein uS15 family. In terms of assembly, part of the 30S ribosomal subunit. Forms a bridge to the 50S subunit in the 70S ribosome, contacting the 23S rRNA.

Functionally, one of the primary rRNA binding proteins, it binds directly to 16S rRNA where it helps nucleate assembly of the platform of the 30S subunit by binding and bridging several RNA helices of the 16S rRNA. Its function is as follows. Forms an intersubunit bridge (bridge B4) with the 23S rRNA of the 50S subunit in the ribosome. The chain is Small ribosomal subunit protein uS15 from Dinoroseobacter shibae (strain DSM 16493 / NCIMB 14021 / DFL 12).